We begin with the raw amino-acid sequence, 171 residues long: AAF/I fimbrial subunit (171 aa).

An N-terminal signal peptide occupies residues 1-28 (MKTLKNMRRKNLCITLGLVSLLSRGANA).

The protein localises to the fimbrium. The sequence is that of AAF/I fimbrial subunit (aggA) from Escherichia coli.